Reading from the N-terminus, the 237-residue chain is UPF0280 protein Mbur_0309 (237 aa).

It belongs to the UPF0280 family.

The protein is UPF0280 protein Mbur_0309 of Methanococcoides burtonii (strain DSM 6242 / NBRC 107633 / OCM 468 / ACE-M).